We begin with the raw amino-acid sequence, 156 residues long: ATP synthase subunit b (156 aa).

Residues 11–31 (AIAFVLFVLFCMKYVWPPLMA) form a helical membrane-spanning segment.

This sequence belongs to the ATPase B chain family. In terms of assembly, F-type ATPases have 2 components, F(1) - the catalytic core - and F(0) - the membrane proton channel. F(1) has five subunits: alpha(3), beta(3), gamma(1), delta(1), epsilon(1). F(0) has three main subunits: a(1), b(2) and c(10-14). The alpha and beta chains form an alternating ring which encloses part of the gamma chain. F(1) is attached to F(0) by a central stalk formed by the gamma and epsilon chains, while a peripheral stalk is formed by the delta and b chains.

It localises to the cell inner membrane. Functionally, f(1)F(0) ATP synthase produces ATP from ADP in the presence of a proton or sodium gradient. F-type ATPases consist of two structural domains, F(1) containing the extramembraneous catalytic core and F(0) containing the membrane proton channel, linked together by a central stalk and a peripheral stalk. During catalysis, ATP synthesis in the catalytic domain of F(1) is coupled via a rotary mechanism of the central stalk subunits to proton translocation. Component of the F(0) channel, it forms part of the peripheral stalk, linking F(1) to F(0). The protein is ATP synthase subunit b of Citrobacter koseri (strain ATCC BAA-895 / CDC 4225-83 / SGSC4696).